The sequence spans 609 residues: MAGRCGARGALSPQLLLFDLPPALLGELCGILDSCDGPLGWRGLAERLSNSWLDVRHIEKYVNQGKSGTRELLWSWAQKNKTIGDLLEVLQDMGHQRAIHLIINYGVSWTPSVQTHHELPFPSFPPEVKHACRENDPGPLEPANVTVDNVLVPEHNEKGTLQKTPISFQSILEGTKHFHKDFLIGEGEIFEVYRVDIRNQAYAVKLFKQEKKMQLKKHWKRFLSELEVLLLFRHPHILELAAYFTETEKLCLVYPYMSNGTLFDRLQCTNGTTPLSWHVRISVLIGIAKAIQYLHNTQPCAVICGNVSSANILLDDQLQPKLTDFAAAHFRPNLEQQSSTINMTGGGRKHLWYMPEEYIRQGRLSVKTDVYSFGIVIMEVLTGCKVVLDDPKHVQLRDLLMELMEKRGLDSCLSFLDRKIPPCPRNFSAKLFSLAGRCVATKAKLRPTMDEVLSSLESTQPSLYFAEDPPTSLKSFRCPSPLFLDNVPSIPVEDDENQNNHSVPPKEVLGTDRVTQKTPFECSQSEVTFLGLDRNRGNRGSEADCNVPSSSHEECWSPELVAPSQDLSPTVISLGSSWEVPGHSYGSKPMEKRCSSGLFCSEHEQSKKQ.

The Death domain maps to 41–106 (WRGLAERLSN…RAIHLIINYG (66 aa)). Residue threonine 110 is modified to Phosphothreonine. A Protein kinase domain is found at 178–463 (FHKDFLIGEG…SSLESTQPSL (286 aa)). ATP-binding positions include 184–192 (IGEGEIFEV), lysine 205, 308–311 (SSAN), and aspartate 324. The residue at position 480 (serine 480) is a Phosphoserine.

This sequence belongs to the protein kinase superfamily. TKL Ser/Thr protein kinase family. Pelle subfamily. In terms of assembly, monomer. Homodimer. May interact with IRAK4 (when phosphorylated). Interacts (when phosphorylated at Thr-110) with PIN1 (via WW domain) in response to IL33-mediated (but not TLR4 ligand LPS) dendritic cell stimulation. In terms of tissue distribution, expressed in inflamed lung macrophages (at protein level). Expressed in dendritic cells (at protein level). Highly expressed in liver and thymus and at lower levels in heart, brain, spleen and kidney.

The protein resides in the cytoplasm. Its subcellular location is the nucleus. Functionally, putative inactive protein kinase which regulates signaling downstream of immune receptors including IL1R and Toll-like receptors. Inhibits dissociation of IRAK1 and IRAK4 from the Toll-like receptor signaling complex by either inhibiting the phosphorylation of IRAK1 and IRAK4 or stabilizing the receptor complex. Upon IL33-induced lung inflammation, positively regulates expression of IL6, CSF3, CXCL2 and CCL5 mRNAs in dendritic cells. In Mus musculus (Mouse), this protein is Interleukin-1 receptor-associated kinase 3.